The sequence spans 1245 residues: MNRGFFNMLGRRPFPAPTAMWRPRRRRQAAPMPARNGLASQIQQLTTAVSALVIGQATRPQNPRPRPPPRQKKQAPKQPPKPKKPKPQEKKKKQPAKTKPGKRQRMALKLEADRLFDVKNEDGDVIGHALAMEGKVMKPLHVKGTIDHPVLSKLKFTKSSAYDMEFAQLPVNMRSEAFTYTSEHPEGFYNWHHGAVQYSGGRFTIPRGVGGRGDSGRPIMDNSGRVVAIVLGGADEGTRTALSVVTWNSKGKTIKTTPEGTEEWSAAPLVTAMCLLGNVSFPCNRPPTCYTREPSRALDILEENVNHEAYDTLLNAILRCGSSGRSKRSVTDDFTLTSPYLGTCSYCHHTEPCFSPIKIEQVWDEADDNTIRIQTSAQFGYDKSGAASTNKYRYMSFEQDHTVKEGTMDDIKISTSGPCRRLSYKGYFLLAKCPPGDSVTVSIASSNSATSCTMARKIKPKFVGREKYDLPPVHGKKIPCTVYDRLKETTAGYITMHRPGPHAYTSYLEESSGKVYAKPPSGKNITYECKCGDYKTGTVTTRTEITGCTAIKQCVAYKSDQTKWVFNSPDLIRHADHTAQGKLHLPFKLIPSTCMVPVAHAPNVIHGFKHISLQLDTDHLTLLTTRRLGANPEPTTEWIIGKTVRNFTVDRDGLEYIWGNHEPVRVYAQESAPGDPHGWPHEIVQHYYHRHPVYTILAVASAAVAMMIGVTVAALCACKARRECLTPYALAPNAVIPTSLALLCCVRSANAETFTETMSYFWSNSQPFFWVQLCIPLAAVIVLMRCCSCCLPFLVVAGAYLAKVDAYEHATTVPNVPQIPYKALVERAGYAPLNLEITVMSSEVLPSTNQEYITCKFTTVVPSPKVKCCGSLECQPAAHADYTCKVFGGVYPFMWGGAQCFCDSENSQMSEAYVELSADCATDHAQAIKVHTAAMKVGLRIVYGNTTSFLDVYVNGVTPGTSKDLKVIAGPISASFTPFDHKVVIHRGLVYNYDFPEYGAMKPGVFGDIQATSLTSKDLIASTDIRLLKPSAKNVHVPYTQAASGFEMWKNNSGRPLQETAPFGCKIAVNPLRAVDCSYGNIPISIDIPNAAFIRTSDAPLVSTVKCDVSECTYSADFGGMATLQYVSDREGQCPVHSHSSTATLQESTVHVLEKGAVTVHFSTASPQANFIVSLCGKKTTCNAECKPPADHIVSTPHKNDQEFQAAISKTSWSWLFALFGGASSLLIIGLTIFACSMMLTSTRR.

The segment at 1 to 106 is disordered; sequence MNRGFFNMLG…KTKPGKRQRM (106 aa). The interval 37-70 is host transcription inhibition; the sequence is GLASQIQQLTTAVSALVIGQATRPQNPRPRPPPR. The segment covering 38–49 has biased composition (polar residues); sequence LASQIQQLTTAV. The Nuclear localization signal signature appears at 63 to 100; the sequence is PRPRPPPRQKKQAPKQPPKPKKPKPQEKKKKQPAKTKP. Basic residues predominate over residues 67-106; that stretch reads PPPRQKKQAPKQPPKPKKPKPQEKKKKQPAKTKPGKRQRM. The tract at residues 86 to 115 is binding to the viral RNA; that stretch reads KPQEKKKKQPAKTKPGKRQRMALKLEADRL. Positions 100 to 114 are ribosome-binding; sequence PGKRQRMALKLEADR. Positions 114 to 264 constitute a Peptidase S3 domain; that stretch reads RLFDVKNEDG…KTTPEGTEEW (151 aa). The active-site Charge relay system is His141. The Nuclear export signal motif lies at 146–156; the sequence is IDHPVLSKLKF. The segment at 157 to 162 is interaction with spike glycoprotein E2; it reads TKSSAY. Catalysis depends on Asp163, which acts as the Charge relay system. Residues 185–195 form a dimerization of the capsid protein region; that stretch reads PEGFYNWHHGA. The active-site Charge relay system is Ser215. A dimerization of the capsid protein region spans residues 221–225; it reads DNSGR. Residues 249–253 form an interaction with spike glycoprotein E2 region; it reads SKGKT. A functions as an uncleaved signal peptide for the precursor of protein E3/E2 region spans residues 265 to 279; the sequence is SAAPLVTAMCLLGNV. Asn278 carries N-linked (GlcNAc...) asparagine; by host glycosylation. 4 disulfide bridges follow: Cys283–Cys289, Cys480–Cys594, Cys529–Cys554, and Cys531–Cys548. Residues 329 to 690 lie on the Extracellular side of the membrane; it reads SVTDDFTLTS…HEIVQHYYHR (362 aa). An N-linked (GlcNAc...) asparagine; by host glycan is attached at Asn524. Residue Asn646 is glycosylated (N-linked (GlcNAc...) asparagine; by host). The helical transmembrane segment at 691 to 718 threads the bilayer; the sequence is HPVYTILAVASAAVAMMIGVTVAALCAC. The tract at residues 719-723 is interaction with the capsid protein; it reads KARRE. Over 719 to 751 the chain is Cytoplasmic; that stretch reads KARRECLTPYALAPNAVIPTSLALLCCVRSANA. Residues Cys724, Cys744, and Cys745 are each lipidated (S-palmitoyl cysteine; by host). A disulfide bridge connects residues Cys724 and Cys745. The Extracellular segment spans residues 752 to 763; that stretch reads ETFTETMSYFWS. Residues 764 to 784 form a helical membrane-spanning segment; it reads NSQPFFWVQLCIPLAAVIVLM. Residue Arg785 is a topological domain, cytoplasmic. Residues 786 to 806 traverse the membrane as a helical segment; that stretch reads CCSCCLPFLVVAGAYLAKVDA. Over 807–1214 the chain is Extracellular; it reads YEHATTVPNV…QAAISKTSWS (408 aa). Cystine bridges form between Cys855–Cys920, Cys868–Cys900, Cys869–Cys902, and Cys874–Cys884. An E1 fusion peptide loop region spans residues 890 to 907; that stretch reads VYPFMWGGAQCFCDSENS. Asn945 and Asn1051 each carry an N-linked (GlcNAc...) asparagine; by host glycan. 4 disulfide bridges follow: Cys1065-Cys1077, Cys1107-Cys1182, Cys1112-Cys1186, and Cys1134-Cys1176. A helical transmembrane segment spans residues 1215–1239; it reads WLFALFGGASSLLIIGLTIFACSMM. The Cytoplasmic segment spans residues 1240 to 1245; that stretch reads LTSTRR.

Homodimer. Homomultimer. Interacts with host karyopherin KPNA4; this interaction allows the nuclear import of the viral capsid protein. Interacts with spike glycoprotein E2. Interacts with host IRAK1; the interaction leads to inhibition of IRAK1-dependent signaling. As to quaternary structure, the precursor of protein E3/E2 and E1 form a heterodimer shortly after synthesis. In terms of assembly, the precursor of protein E3/E2 and E1 form a heterodimer shortly after synthesis. Processing of the precursor of protein E3/E2 into E2 and E3 results in a heterodimer of the spike glycoproteins E2 and E1. Spike at virion surface are constituted of a trimer of E2-E1 heterodimers. After target cell attachment and endocytosis, E1 change conformation to form homotrimers. E2-E1 heterodimers interact with host VLDLR or LRP8/APOER2 to mediate viral entry. Interacts with 6K protein. Processing of the precursor of protein E3/E2 into E2 and E3 results in a heterodimer of the spike glycoproteins E2 and E1. Spike at virion surface are constituted of a trimer of E2-E1 heterodimers. E2-E1 heterodimers interact with host VLDLR or LRP8/APOER2 to mediate viral entry. Interacts with 6K protein. Interacts with the capsid protein. As to quaternary structure, oligomer. Interacts with spike glycoprotein E1. Interacts with spike glycoprotein E2. Structural polyprotein: Specific enzymatic cleavages in vivo yield mature proteins. Capsid protein is auto-cleaved during polyprotein translation, unmasking a signal peptide at the N-terminus of the precursor of E3/E2. The remaining polyprotein is then targeted to the host endoplasmic reticulum, where host signal peptidase cleaves it into pE2, 6K and E1 proteins. pE2 is further processed to mature E3 and E2 by host furin in trans-Golgi vesicle. In terms of processing, palmitoylated via thioester bonds. These palmitoylations may induce disruption of the C-terminus transmembrane. This would result in the reorientation of E2 C-terminus from lumenal to cytoplasmic side. Post-translationally, N-glycosylated. Palmitoylated via thioester bonds.

It localises to the virion. The protein resides in the host cytoplasm. The protein localises to the host cell membrane. Its subcellular location is the host nucleus. It is found in the virion membrane. It localises to the host Golgi apparatus. The protein resides in the host trans-Golgi network. The protein localises to the host endoplasmic reticulum. It carries out the reaction Autocatalytic release of the core protein from the N-terminus of the togavirus structural polyprotein by hydrolysis of a -Trp-|-Ser- bond.. Functionally, forms an icosahedral capsid with a T=4 symmetry composed of 240 copies of the capsid protein surrounded by a lipid membrane through which penetrate 80 spikes composed of trimers of E1-E2 heterodimers. The capsid protein binds to the viral RNA genome at a site adjacent to a ribosome binding site for viral genome translation following genome release. Possesses a protease activity that results in its autocatalytic cleavage from the nascent structural protein. Following its self-cleavage, the capsid protein transiently associates with ribosomes, and within several minutes the protein binds to viral RNA and rapidly assembles into icosahedric core particles. The resulting nucleocapsid eventually associates with the cytoplasmic domain of the spike glycoprotein E2 at the cell membrane, leading to budding and formation of mature virions. In case of infection, new virions attach to target cells and after clathrin-mediated endocytosis their membrane fuses with the host endosomal membrane. This leads to the release of the nucleocapsid into the cytoplasm, followed by an uncoating event necessary for the genomic RNA to become accessible. The uncoating might be triggered by the interaction of capsid proteins with ribosomes. Binding of ribosomes would release the genomic RNA since the same region is genomic RNA-binding and ribosome-binding. Specifically inhibits interleukin-1 receptor-associated kinase 1/IRAK1-dependent signaling during viral entry, representing a means by which the alphaviruses may evade innate immune detection and activation prior to viral gene expression. Provides the signal sequence for the translocation of the precursor of protein E3/E2 to the host endoplasmic reticulum. Furin-cleaved E3 remains associated with spike glycoprotein E1 and mediates pH protection of the latter during the transport via the secretory pathway. After virion release from the host cell, the assembly protein E3 is gradually released in the extracellular space. In terms of biological role, plays a role in viral attachment to target host cell, by binding to the cell receptors VLDLR or LRP8/APOER2. Synthesized as a pE2 precursor which is processed by furin at the cell membrane just before virion budding, giving rise to E2-E1 heterodimer. The pE2-E1 heterodimer is stable, whereas E2-E1 is unstable and dissociate at low pH. pE2 is processed at the last step, presumably to avoid E1 fusion activation before its final export to cell surface. E2 C-terminus contains a transitory transmembrane that would be disrupted by palmitoylation, resulting in reorientation of the C-terminal tail from lumenal to cytoplasmic side. This step is critical since E2 C-terminus is involved in budding by interacting with capsid proteins. This release of E2 C-terminus in cytoplasm occurs lately in protein export, and precludes premature assembly of particles at the endoplasmic reticulum membrane. Its function is as follows. Acts as a viroporin that participates in virus glycoprotein processing and transport to the plasma membrane, cell permeabilization and budding of viral particles. Disrupts the calcium homeostasis of the cell, probably at the endoplasmic reticulum level resulting in the increased levels of cytoplasmic calcium. Because of its lipophilic properties, the 6K protein is postulated to influence the selection of lipids that interact with the transmembrane domains of the glycoproteins, which, in turn, affects the deformability of the bilayer required for the extreme curvature that occurs as budding proceeds. Present in low amount in virions, about 3% compared to viral glycoproteins. Functionally, class II viral fusion protein. Fusion activity is inactive as long as E1 is bound to E2 in mature virion. After virus attachment to target cell via host VLDLR or LRP8/APOER2 and endocytosis, acidification of the endosome induces dissociation of E1/E2 heterodimer and concomitant trimerization of the E1 subunits. This E1 trimer is fusion active, and promotes release of viral nucleocapsid in cytoplasm after endosome and viral membrane fusion. Efficient fusion requires the presence of cholesterol and sphingolipid in the target membrane. The chain is Structural polyprotein from Acrocephalus scirpaceus (Eurasian reed-warbler).